The following is a 1071-amino-acid chain: SLIT-ROBO Rho GTPase-activating protein 2 (1071 aa).

Residues 22-325 (KEIRAQLTEQ…AVENLDATSD (304 aa)) form the F-BAR domain. Residues 181–203 (LKEAEKQEEKQIGKSVKQEDRQT) show a composition bias toward basic and acidic residues. The segment at 181 to 211 (LKEAEKQEEKQIGKSVKQEDRQTPRSPDSTA) is disordered. At serine 206 the chain carries Phosphoserine. A coiled-coil region spans residues 363–401 (QSELVQRRQQLQSRLSTLKIENEEVKKTMEATLQTIQDI). 5 positions are modified to phosphoserine: serine 427, serine 500, serine 691, serine 695, and serine 724. The Rho-GAP domain occupies 489-679 (ARRSSTVRKQ…TIIIQHENIF (191 aa)). A disordered region spans residues 703-726 (THGETISAEDSTQDVTAEHHTSDD). Residues 728–787 (CEPIEAIAKFDYVGRTARELSFKKGASLLLYQRASDDWWEGRHNGIDGLIPHQYIVVQDT) enclose the SH3 domain. Disordered stretches follow at residues 794-820 (RSSP…GASC) and 835-936 (NKQR…NHRP). Phosphoserine is present on serine 795. 3 stretches are compositionally biased toward polar residues: residues 857-867 (LGSSLTDSSSP), 874-885 (RPSSQPIMSQNL), and 897-907 (GHGSLNSISRH). Serine 916 carries the phosphoserine modification. Residues 919 to 933 (IRKTATAGRSKSFNN) show a composition bias toward polar residues. Arginine 927 is subject to Symmetric dimethylarginine; by PRMT5. Phosphoserine is present on serine 930. A coiled-coil region spans residues 940 to 968 (EVIAQDIEATMNSALNELQELERQSSAKH). The tract at residues 983–1012 (SPVVAPTSEPSSPLHTQLLKDPEPAFQRSA) is disordered. 4 positions are modified to phosphoserine: serine 990, serine 994, serine 1013, and serine 1027. The segment at 1029–1071 (KMAAPVKPPATRPKPTVFPKTNATSPGVNSSASPQSTDKSCTV) is disordered. Residues 1047 to 1071 (PKTNATSPGVNSSASPQSTDKSCTV) show a composition bias toward polar residues.

Homodimer. Forms a heterooligomer with SRGAP1 and SRGAP3 through its F-BAR domain. Interacts (via SH3 domain) with GPHN. Interacts (via SH3 domain) with FMNL1 (activated by RAC1); regulates the actin filament severing activity of FMNL1 and actin dynamics. Interacts (via SH3 domain) with FMNL3. Interacts with RAC1; specifically stimulates RAC1 GTPase activity. Interacts (via F-BAR domain) with HOMER1. Interacts with ROBO1 and ROBO2. Interacts with FASLG. Interacts with PRMT5. In terms of processing, methylation at Arg-927 is required for the stimulation of cell migration, dimerization and localization at the plasma membrane protrusions.

It localises to the cell membrane. The protein resides in the cell projection. The protein localises to the dendritic spine. Its subcellular location is the postsynaptic density. It is found in the postsynaptic cell membrane. It localises to the lamellipodium. The protein resides in the cytoplasmic vesicle. The protein localises to the phagosome. Its subcellular location is the nucleus. It is found in the cytoplasm. It localises to the cytosol. In terms of biological role, postsynaptic RAC1 GTPase activating protein (GAP) that plays a key role in neuronal morphogenesis and migration mainly during development of the cerebral cortex. Regulates excitatory and inhibitory synapse maturation and density in cortical pyramidal neurons. SRGAP2/SRGAP2A limits excitatory and inhibitory synapse density through its RAC1-specific GTPase activating activity, while it promotes maturation of both excitatory and inhibitory synapses through its ability to bind to the postsynaptic scaffolding protein HOMER1 at excitatory synapses, and the postsynaptic protein GPHN at inhibitory synapses. Mechanistically, acts by binding and deforming membranes, thereby regulating actin dynamics to regulate cell migration and differentiation. Promotes cell repulsion and contact inhibition of locomotion: localizes to protrusions with curved edges and controls the duration of RAC1 activity in contact protrusions. In non-neuronal cells, may also play a role in cell migration by regulating the formation of lamellipodia and filopodia. This Rattus norvegicus (Rat) protein is SLIT-ROBO Rho GTPase-activating protein 2.